Consider the following 944-residue polypeptide: 2-oxoglutarate dehydrogenase E1 component (944 aa).

Residues 918 to 944 (SSTAEGDPTVHKKEQERIVSDSLTRKN) are disordered. Basic and acidic residues predominate over residues 925 to 936 (PTVHKKEQERIV).

Belongs to the alpha-ketoglutarate dehydrogenase family. As to quaternary structure, homodimer. Part of the 2-oxoglutarate dehydrogenase (OGDH) complex composed of E1 (2-oxoglutarate dehydrogenase), E2 (dihydrolipoamide succinyltransferase) and E3 (dihydrolipoamide dehydrogenase); the complex contains multiple copies of the three enzymatic components (E1, E2 and E3). It depends on thiamine diphosphate as a cofactor.

The enzyme catalyses N(6)-[(R)-lipoyl]-L-lysyl-[protein] + 2-oxoglutarate + H(+) = N(6)-[(R)-S(8)-succinyldihydrolipoyl]-L-lysyl-[protein] + CO2. E1 component of the 2-oxoglutarate dehydrogenase (OGDH) complex which catalyzes the decarboxylation of 2-oxoglutarate, the first step in the conversion of 2-oxoglutarate to succinyl-CoA and CO(2). This is 2-oxoglutarate dehydrogenase E1 component from Bacillus pumilus (strain SAFR-032).